Here is a 420-residue protein sequence, read N- to C-terminus: Pyrin and HIN domain-containing protein 1 (420 aa).

A Pyrin domain is found at 1–87 (MVNEYKRIVL…ANKLKNEKAK (87 aa)). Disordered regions lie at residues 82–201 (KNEK…SSSA) and 216–236 (RLKNVPKEPSEENGHQQGSKK). Residues 87–102 (KAKRTRTGKRKTAAKR) show a composition bias toward basic residues. Polar residues-rich tracts occupy residues 108-118 (PSTSQPMSTTN) and 126-151 (GRSTPDTQVAQLSLPTASRRNQAIQI). The span at 152-169 (SPTIASSSGQTSSRSSET) shows a compositional bias: low complexity. The span at 170-201 (LQSIIQSPKTPKRPSSSILDPPVSSGTASSSA) shows a compositional bias: polar residues. Residues 219–416 (NVPKEPSEEN…STTHSNMQVI (198 aa)) enclose the HIN-200 domain. Residues 220-229 (VPKEPSEENG) show a composition bias toward basic and acidic residues.

It belongs to the HIN-200 family.

It localises to the nucleus. The chain is Pyrin and HIN domain-containing protein 1 from Mus musculus (Mouse).